A 99-amino-acid chain; its full sequence is Large ribosomal subunit protein bL27 (99 aa).

The tract at residues 1-21 (MAHKKGGGSTRNGRDSRAKRL) is disordered.

It belongs to the bacterial ribosomal protein bL27 family.

The chain is Large ribosomal subunit protein bL27 from Thermomicrobium roseum (strain ATCC 27502 / DSM 5159 / P-2).